Consider the following 1099-residue polypeptide: Zinc finger protein basonuclin-2 (1099 aa).

The tract at residues E45–R66 is disordered. Basic and acidic residues predominate over residues V49–R66. Residue K277 forms a Glycyl lysine isopeptide (Lys-Gly) (interchain with G-Cter in SUMO2) linkage. The tract at residues L357–N385 is disordered. Over residues N361 to S372 the composition is skewed to low complexity. Positions P375–N385 are enriched in polar residues. Glycyl lysine isopeptide (Lys-Gly) (interchain with G-Cter in SUMO2) cross-links involve residues K396, K416, and K421. Residues T397–S423 are disordered. The segment at V441–H464 adopts a C2H2-type 1 zinc-finger fold. The residue at position 561 (S561) is a Phosphoserine. 2 disordered regions span residues E622–K641 and D648–E742. A Glycyl lysine isopeptide (Lys-Gly) (interchain with G-Cter in SUMO2) cross-link involves residue K641. The segment covering D648–N661 has biased composition (acidic residues). Basic and acidic residues-rich tracts occupy residues M670–E680 and E719–E742. The C2H2-type 2 zinc-finger motif lies at K833–H856. Residues K894 and K919 each participate in a glycyl lysine isopeptide (Lys-Gly) (interchain with G-Cter in SUMO2) cross-link. Disordered regions lie at residues L929–G948 and L968–A1008. Residues A982–G995 show a composition bias toward acidic residues. 2 consecutive C2H2-type zinc fingers follow at residues I1035–H1058 and H1063–H1090. Residues S1079 to D1099 are disordered.

As to expression, highly expressed in testis, uterus and small intestine, and weakly expressed in colon and prostate. Also expressed in skin, primary keratinocytes, immortalized keratinocytes, and HeLa and HEK293 cells. Not detected in blood, thymus, spleen or Hep-G2 cells.

It is found in the nucleus. Probable transcription factor specific for skin keratinocytes. May play a role in the differentiation of spermatozoa and oocytes. May also play an important role in early urinary-tract development. The sequence is that of Zinc finger protein basonuclin-2 from Homo sapiens (Human).